A 275-amino-acid polypeptide reads, in one-letter code: Mitochondrial outer membrane protein porin (275 aa).

At Met1 the chain carries Blocked amino end (Met).

Belongs to the eukaryotic mitochondrial porin family. Highly divergent.

Its subcellular location is the mitochondrion outer membrane. Its function is as follows. Forms a channel of about 1,7 nM through the cell membrane that allows diffusion of small hydrophilic molecules. The channel adopts an open conformation at low or zero membrane potential and a closed conformation at potentials above 20 mv. The open state has a weak anion selectivity whereas the closed state is cation-selective. The chain is Mitochondrial outer membrane protein porin (porA) from Dictyostelium discoideum (Social amoeba).